A 647-amino-acid chain; its full sequence is Protein cueball (647 aa).

The N-terminal stretch at 1–22 is a signal peptide; that stretch reads MLWCPSVLVPLIAVAACLPVLA. Topologically, residues 23–534 are extracellular; the sequence is IGTPLEWEFA…CMTPSPWTSN (512 aa). 2 N-linked (GlcNAc...) asparagine glycosylation sites follow: Asn-80 and Asn-106. LDL-receptor class B repeat units lie at residues 119-166, 167-211, and 212-257; these read RNLF…DVCR, RKLY…DQLS, and DRIF…TNDA. Asn-175 carries an N-linked (GlcNAc...) asparagine glycan. Asn-316 is a glycosylation site (N-linked (GlcNAc...) asparagine). EGF-like domains lie at 365–401 and 436–473; these read DEKT…SRCE and EISK…ERCE. Cystine bridges form between Cys-376–Cys-389, Cys-391–Cys-400, Cys-440–Cys-450, Cys-444–Cys-461, and Cys-463–Cys-472. Asn-475 carries an N-linked (GlcNAc...) asparagine glycan. The helical transmembrane segment at 535–555 threads the bilayer; it reads VIIVLVLGIVSCFFLVAVIVH. Over 556–647 the chain is Cytoplasmic; it reads GFRRLYKPKR…LIHNMDDDLY (92 aa).

This sequence belongs to the cueball family.

The protein localises to the cell membrane. Has a role in spermatogenesis and oogenesis. This Drosophila persimilis (Fruit fly) protein is Protein cueball.